Reading from the N-terminus, the 1774-residue chain is Kinesin-like protein KIF20B (1774 aa).

One can recognise a Kinesin motor domain in the interval 58–477 (YLQVCLRIRP…LKFSTTAQRV (420 aa)). Position 152-159 (152-159 (GLTNSGKT)) interacts with ATP. Serine 486 bears the Phosphoserine mark. Coiled coils occupy residues 525–601 (EDVL…KIRE) and 705–747 (QEAI…LVQA). Acidic residues predominate over residues 538–555 (EENEETQNMETELTDEDS). Disordered stretches follow at residues 538–557 (EENEETQNMETELTDEDSDK) and 740–799 (ESNS…PPAK). Over residues 741 to 778 (SNSLVQALKTSSKVDTSLTSNKSTCNETSEMPKNSRAQ) the composition is skewed to polar residues. Over residues 779-788 (THSERKRLNE) the composition is skewed to basic and acidic residues. Positions 824–946 (SEVVEGNRVL…QMQTKIDELR (123 aa)) form a coiled coil. At serine 950 the chain carries Phosphoserine. Residues 1002 to 1059 (ENSFHASIEAIWEECKEIVKASSKKSHQIQGLEEQIEKLQVEVKGYREENSDLRAQES) are necessary and sufficient for interaction with SHTN1. Positions 1021–1507 (KASSKKSHQI…DEEIQELRKA (487 aa)) form a coiled coil. A phosphoserine mark is found at serine 1107 and serine 1542. Positions 1514 to 1774 (TENQTMNPKP…KRRLRTRTAK (261 aa)) are interaction with PIN1. Residue threonine 1598 is modified to Phosphothreonine; by CDK1. A Phosphoserine modification is found at serine 1612. The interval 1625–1663 (KKNSTPRSNVKFPVSEHRNSPVKKEQKVSVGPSSKKTYS) is disordered. Residues 1638 to 1651 (VSEHRNSPVKKEQK) are compositionally biased toward basic and acidic residues. Phosphoserine is present on residues serine 1669 and serine 1694.

It belongs to the TRAFAC class myosin-kinesin ATPase superfamily. Kinesin family. Oligomerizes (via kinesin motor domain). Associates with microtubules. Interacts (via C-terminal globular tail region) with PIN1 (via WW domain). Interacts with PRC1. Interacts with SHTN1 (via N-terminus); the interaction is direct and promotes the association of SHTN1 to microtubules in primary neurons. Associates with microtubules. Post-translationally, phosphorylated during mitosis by CDK1. In terms of tissue distribution, expressed in the brain (at protein level).

It is found in the nucleus. Its subcellular location is the cytoplasm. The protein resides in the cytoskeleton. It localises to the microtubule organizing center. The protein localises to the centrosome. It is found in the nucleolus. Its subcellular location is the nucleoplasm. The protein resides in the spindle. It localises to the spindle pole. The protein localises to the midbody. It is found in the cell projection. Its subcellular location is the axon. The protein resides in the growth cone. Plus-end-directed motor enzyme that is required for completion of cytokinesis. Required for proper midbody organization and abscission in polarized cortical stem cells. Plays a role in the regulation of neuronal polarization by mediating the transport of specific cargos. Participates in the mobilization of SHTN1 and in the accumulation of PIP3 in the growth cone of primary hippocampal neurons in a tubulin and actin-dependent manner. In the developing telencephalon, cooperates with SHTN1 to promote both the transition from the multipolar to the bipolar stage and the radial migration of cortical neurons from the ventricular zone toward the superficial layer of the neocortex. Involved in cerebral cortex growth. Acts as an oncogene for promoting bladder cancer cells proliferation, apoptosis inhibition and carcinogenic progression. This chain is Kinesin-like protein KIF20B, found in Mus musculus (Mouse).